The primary structure comprises 353 residues: Protein pelota homolog (353 aa).

Belongs to the eukaryotic release factor 1 family. Pelota subfamily. In terms of assembly, monomer. It depends on a divalent metal cation as a cofactor.

The protein resides in the cytoplasm. In terms of biological role, may function in recognizing stalled ribosomes, interact with stem-loop structures in stalled mRNA molecules, and effect endonucleolytic cleavage of the mRNA. May play a role in the release non-functional ribosomes and degradation of damaged mRNAs. Has endoribonuclease activity. The polypeptide is Protein pelota homolog (Methanopyrus kandleri (strain AV19 / DSM 6324 / JCM 9639 / NBRC 100938)).